Consider the following 213-residue polypeptide: High frequency lysogenization protein HflD homolog (213 aa).

The stretch at 79-122 forms a coiled coil; that stretch reads QGLNAELTRYTLSLMVLERKLSSAKGALNTLGDRINGLQRQLDH.

This sequence belongs to the HflD family.

The protein localises to the cytoplasm. It is found in the cell inner membrane. The sequence is that of High frequency lysogenization protein HflD homolog from Salmonella dublin (strain CT_02021853).